The primary structure comprises 198 residues: Carnitine operon protein CaiE (198 aa).

The segment at 179-198 (VEENRPRLKGTTDVKPKSAQ) is disordered. Basic and acidic residues predominate over residues 180–198 (EENRPRLKGTTDVKPKSAQ).

Belongs to the transferase hexapeptide repeat family.

The protein operates within amine and polyamine metabolism; carnitine metabolism. Its function is as follows. Overproduction of CaiE stimulates the activity of CaiB and CaiD. In Salmonella typhi, this protein is Carnitine operon protein CaiE.